The chain runs to 226 residues: MNFLKSFPFYAFLCFGQYFVAVTHAATFDIVNQCTYTVWAAASPGGGRQLNSGQSWSINVNPGTVQARIWGRTNCNFDGSGRGNCETGDCNGMLECQGYGKPPNTLAEFALNQPNQDFVDISLVDGFNIPMEFSPTNGGCRNLRCTAPINEQCPAQLKTQGGCNNPCTVIKTNEFCCTNGPGSCGPTDLSRFFKARCPDAYSYPQDDPPSLFTCPPGTNYRVVFCP.

The signal sequence occupies residues 1–25; the sequence is MNFLKSFPFYAFLCFGQYFVAVTHA. Intrachain disulfides connect Cys-34-Cys-225, Cys-75-Cys-85, Cys-90-Cys-96, Cys-140-Cys-214, Cys-145-Cys-197, Cys-153-Cys-163, Cys-167-Cys-176, and Cys-177-Cys-184.

The protein belongs to the thaumatin family.

Its subcellular location is the vacuole. This is Pathogenesis-related protein R minor form from Nicotiana tabacum (Common tobacco).